A 142-amino-acid polypeptide reads, in one-letter code: Large ribosomal subunit protein uL11 (142 aa).

This sequence belongs to the universal ribosomal protein uL11 family. Part of the ribosomal stalk of the 50S ribosomal subunit. Interacts with L10 and the large rRNA to form the base of the stalk. L10 forms an elongated spine to which L12 dimers bind in a sequential fashion forming a multimeric L10(L12)X complex. One or more lysine residues are methylated.

Forms part of the ribosomal stalk which helps the ribosome interact with GTP-bound translation factors. This is Large ribosomal subunit protein uL11 from Shewanella amazonensis (strain ATCC BAA-1098 / SB2B).